Consider the following 413-residue polypeptide: Tyrosine--tRNA ligase (413 aa).

Residues 59–68 (PTAPDIHLGH) carry the 'HIGH' region motif. The 'KMSKS' region signature appears at 243–247 (KMSKS). ATP is bound at residue K246. The region spanning 351 to 411 (LAIGQLLKQA…GKRRFARVTL (61 aa)) is the S4 RNA-binding domain.

It belongs to the class-I aminoacyl-tRNA synthetase family. TyrS type 2 subfamily. Homodimer.

The protein localises to the cytoplasm. It catalyses the reaction tRNA(Tyr) + L-tyrosine + ATP = L-tyrosyl-tRNA(Tyr) + AMP + diphosphate + H(+). Its function is as follows. Catalyzes the attachment of tyrosine to tRNA(Tyr) in a two-step reaction: tyrosine is first activated by ATP to form Tyr-AMP and then transferred to the acceptor end of tRNA(Tyr). The sequence is that of Tyrosine--tRNA ligase from Burkholderia mallei (strain ATCC 23344).